The chain runs to 447 residues: Phosphoglucosamine mutase (447 aa).

Ser108 (phosphoserine intermediate) is an active-site residue. Residues Ser108, Asp247, Asp249, and Asp251 each coordinate Mg(2+). Residue Ser108 is modified to Phosphoserine.

The protein belongs to the phosphohexose mutase family. The cofactor is Mg(2+). Post-translationally, activated by phosphorylation.

The enzyme catalyses alpha-D-glucosamine 1-phosphate = D-glucosamine 6-phosphate. Its function is as follows. Catalyzes the conversion of glucosamine-6-phosphate to glucosamine-1-phosphate. The sequence is that of Phosphoglucosamine mutase from Bordetella avium (strain 197N).